A 101-amino-acid chain; its full sequence is NAD(P)H-quinone oxidoreductase subunit 4L, chloroplastic (101 aa).

3 helical membrane-spanning segments follow: residues 2–22 (ILEH…YGLI), 32–52 (MCLE…SDFF), and 61–81 (IFCI…LAIV).

Belongs to the complex I subunit 4L family. NDH is composed of at least 16 different subunits, 5 of which are encoded in the nucleus.

Its subcellular location is the plastid. It localises to the chloroplast thylakoid membrane. The catalysed reaction is a plastoquinone + NADH + (n+1) H(+)(in) = a plastoquinol + NAD(+) + n H(+)(out). It carries out the reaction a plastoquinone + NADPH + (n+1) H(+)(in) = a plastoquinol + NADP(+) + n H(+)(out). NDH shuttles electrons from NAD(P)H:plastoquinone, via FMN and iron-sulfur (Fe-S) centers, to quinones in the photosynthetic chain and possibly in a chloroplast respiratory chain. The immediate electron acceptor for the enzyme in this species is believed to be plastoquinone. Couples the redox reaction to proton translocation, and thus conserves the redox energy in a proton gradient. This Draba nemorosa (Woodland whitlowgrass) protein is NAD(P)H-quinone oxidoreductase subunit 4L, chloroplastic.